A 323-amino-acid chain; its full sequence is MAVFTAVTEAQLADWMRHYDLGEVVEFRGITSGIENSNFFLTTTRGEYVLTIFEKLTAQQLPFYLDLMRHLASHRVPVPDPMPRDDGALFGMLNGKPATIVTKLDGAPELAPGAAHCVEVGQMLARLHLAGRDFAHHQPNLRSLPWWQETVPSIAPFLSDARRTLLTEELAHQQAFFASADYASLPGGPCHCDLFRDNVLFAHAAPGTHHEVELGGFFDFYFAGCDKWLFDVAVTVNDWCVDLATGKLDEARVEAMLRAYQTVRPFTPAEARHWGDMLRAGAYRFWVSRLYDFHMPRAAELLKPHDPGHFERILRERLAGAAL.

This sequence belongs to the pseudomonas-type ThrB family.

It carries out the reaction L-homoserine + ATP = O-phospho-L-homoserine + ADP + H(+). The protein operates within amino-acid biosynthesis; L-threonine biosynthesis; L-threonine from L-aspartate: step 4/5. The chain is Homoserine kinase from Paraburkholderia phymatum (strain DSM 17167 / CIP 108236 / LMG 21445 / STM815) (Burkholderia phymatum).